We begin with the raw amino-acid sequence, 463 residues long: O-acetyltransferase SAT5 (463 aa).

The protein belongs to the trichothecene 3-O-acetyltransferase family.

It functions in the pathway mycotoxin biosynthesis. In terms of biological role, O-acetyltransferase; part of the satratoxin SC1 cluster involved in the biosynthesis of satratoxins, trichothecene mycotoxins that are associated with human food poisonings. Satratoxins are suggested to be made by products of multiple gene clusters (SC1, SC2 and SC3) that encode 21 proteins in all, including polyketide synthases, acetyltransferases, and other enzymes expected to modify the trichothecene skeleton. SC1 encodes 10 proteins, SAT1 to SAT10. The largest are SAT8, which encodes a putative polyketide synthase (PKS) with a conventional non-reducing architecture, and SAT10, a putative protein containing four ankyrin repeats and thus may be involved in protein scaffolding. The putative short-chain reductase SAT3 may assist the PKS in some capacity. SAT6 contains a secretory lipase domain and acts probably as a trichothecene esterase. SAT5 encodes a putative acetyltransferase, and so, with SAT6, may affect endogenous protection from toxicity. The probable transcription factor SAT9 may regulate the expression of the SC1 cluster. SC2 encodes proteins SAT11 to SAT16, the largest of which encodes the putative reducing PKS SAT13. SAT11 is a cytochrome P450 monooxygenase, while SAT14 and SAT16 are probable acetyltransferases. The SC2 cluster may be regulated by the transcription factor SAT15. SC3 is a small cluster that encodes 5 proteins, SAT17 to SAT21. SAT21 is a putative MFS-type transporter which may have a role in exporting secondary metabolites. The four other proteins putatively encoded in SC3 include the taurine hydroxylase-like protein SAT17, the O-methyltransferase SAT18, the acetyltransferase SAT19, and the Cys6-type zinc finger SAT20, the latter being probably involved in regulation of SC3 expression. The sequence is that of O-acetyltransferase SAT5 from Stachybotrys chartarum (strain CBS 109288 / IBT 7711) (Toxic black mold).